A 349-amino-acid chain; its full sequence is MKKTPLYEAHLRLGARMVDFAGYLLPLQYTSIVEEHLAVRRAVGVFDVSHMGEFLVRGKEALAFLQWATANDAGKLKVGRAQYSMLPNERGGVVDDIYLYRLGEEEYLMVVNAANIAKDLAHLQALAKGFRVELEDASERTALLALQGPKAASLLQGLTDLDLSQKRKNDVFPARVAGRPARLARTGYTGEDGFELFLAPEDAEPVFLALVEAGAKPAGLGARDSLRLEAGFPLYGHELTEETNPLCTPWAWVVKKEKAFLGKEAMLAQACRERLVGLVLEGGIPREGYRVLSGGRPVGRVTSGGYSPLLQRGIALAYVEEGAEGPFQVEVRGRAVPAALSPLPFVPLK.

Belongs to the GcvT family. The glycine cleavage system is composed of four proteins: P, T, L and H.

The catalysed reaction is N(6)-[(R)-S(8)-aminomethyldihydrolipoyl]-L-lysyl-[protein] + (6S)-5,6,7,8-tetrahydrofolate = N(6)-[(R)-dihydrolipoyl]-L-lysyl-[protein] + (6R)-5,10-methylene-5,6,7,8-tetrahydrofolate + NH4(+). Functionally, the glycine cleavage system catalyzes the degradation of glycine. This Thermus thermophilus (strain ATCC 27634 / DSM 579 / HB8) protein is Aminomethyltransferase.